A 215-amino-acid chain; its full sequence is Ras-related protein Rab-5A (215 aa).

GTP-binding residues include Ser29, Ala30, Gly32, Lys33, Ser34, Ser35, His46, Glu47, Thr52, and Gly78. Mg(2+) is bound at residue Ser34. 2 short sequence motifs (switch) span residues 44–56 and 77–93; these read QFHE…IGAA and AGQE…YRGA. Thr52 is a binding site for Mg(2+). Phosphoserine; by LRRK2 is present on Ser84. Arg120 carries (Microbial infection) N-beta-linked (GlcNAc) arginine glycosylation. Residues Asn133, Lys134, Asp136, Ala164, and Lys165 each coordinate GTP. The segment at 181–215 is disordered; that stretch reads LPKNEPQNPGANSARGRGVDLTEPTQPTRNQCCSN. The segment covering 203-215 has biased composition (polar residues); the sequence is EPTQPTRNQCCSN. Residues Cys212 and Cys213 are each lipidated (S-geranylgeranyl cysteine).

It belongs to the small GTPase superfamily. Rab family. Interacts with SGSM1 and SGSM3. Interacts with PIK3CB. Interacts with GDI1; this promotes dissociation from membranes; phosphorylation at Ser-84 disrupts this interaction. Interacts with GDI2; phosphorylation at Ser-84 disrupts the interaction. Interacts with EEA1. Interacts with RIN1 and GAPVD1, which regulate its pathway, probably by acting as a GEF. Interacts with RINL. Interacts with ALS2CL, SUN2, ZFYVE20 and RUFY1. Interacts with RABEP1; one RABEP1 homodimer binds two RAB5A chains, but at opposite sides of the dimer. Interacts with OCRL. Interacts with INPP5F. May be a component of a complex composed of RAB5A, DYN2 and PIK3C3. Does not interact with BLOC-3 complex (heterodimer of HPS1 and HPS4). Interacts with CLN5. Interacts with APPL2. Interacts with F8A1/F8A2/F8A3. Found in a complex with F8A1/F8A2/F8A3, HTT and RAB5A; mediates the recruitment of HTT by RAB5A onto early endosomes. Interacts with ATP9A. Interacts with PPP1R21; mediates the recruitment of FERRY complex by RAB5A onto early endosomes. Requires Mg(2+) as cofactor. In terms of processing, phosphorylation of Ser-84 in the switch II region by LRRK2 prevents the association of RAB regulatory proteins, including RAB GDP dissociation inhibitors GDI1 and GDI2. Post-translationally, (Microbial infection) Glycosylated on arginine residues by S.typhimurium protein Ssek3.

It is found in the cell membrane. Its subcellular location is the early endosome membrane. The protein localises to the melanosome. It localises to the cytoplasmic vesicle. The protein resides in the cell projection. It is found in the ruffle. Its subcellular location is the membrane. The protein localises to the cytoplasm. It localises to the cytosol. The protein resides in the phagosome membrane. It is found in the endosome membrane. It catalyses the reaction GTP + H2O = GDP + phosphate + H(+). Regulated by guanine nucleotide exchange factors (GEFs) including RINL, which promote the exchange of bound GDP for free GTP. Regulated by GTPase activating proteins (GAPs) which increase the GTP hydrolysis activity. Inhibited by GDP dissociation inhibitors (GDIs). In terms of biological role, the small GTPases Rab are key regulators of intracellular membrane trafficking, from the formation of transport vesicles to their fusion with membranes. Rabs cycle between an inactive GDP-bound form and an active GTP-bound form that is able to recruit to membranes different sets of downstream effectors directly responsible for vesicle formation, movement, tethering and fusion. RAB5A is required for the fusion of plasma membranes and early endosomes. Contributes to the regulation of filopodia extension. Required for the exosomal release of SDCBP, CD63, PDCD6IP and syndecan. Regulates maturation of apoptotic cell-containing phagosomes, probably downstream of DYN2 and PIK3C3. In Homo sapiens (Human), this protein is Ras-related protein Rab-5A.